We begin with the raw amino-acid sequence, 617 residues long: Proline--tRNA ligase (617 aa).

It belongs to the class-II aminoacyl-tRNA synthetase family. ProS type 1 subfamily. Homodimer.

The protein localises to the cytoplasm. The catalysed reaction is tRNA(Pro) + L-proline + ATP = L-prolyl-tRNA(Pro) + AMP + diphosphate. Functionally, catalyzes the attachment of proline to tRNA(Pro) in a two-step reaction: proline is first activated by ATP to form Pro-AMP and then transferred to the acceptor end of tRNA(Pro). As ProRS can inadvertently accommodate and process non-cognate amino acids such as alanine and cysteine, to avoid such errors it has two additional distinct editing activities against alanine. One activity is designated as 'pretransfer' editing and involves the tRNA(Pro)-independent hydrolysis of activated Ala-AMP. The other activity is designated 'posttransfer' editing and involves deacylation of mischarged Ala-tRNA(Pro). The misacylated Cys-tRNA(Pro) is not edited by ProRS. This is Proline--tRNA ligase from Streptococcus pneumoniae (strain Hungary19A-6).